The primary structure comprises 276 residues: Triple specificity protein phosphatase PtpB (276 aa).

The active-site Phosphocysteine intermediate is the C160. Residues L232–Y250 form a UIM-like region region.

It belongs to the protein-tyrosine phosphatase family. In terms of assembly, interacts (via UIM-like region) with host ubiquitin; activating the phosphatidylinositol phosphate phosphatase activity.

It localises to the secreted. Its subcellular location is the host cytoplasm. It is found in the host cell membrane. The enzyme catalyses O-phospho-L-tyrosyl-[protein] + H2O = L-tyrosyl-[protein] + phosphate. It carries out the reaction O-phospho-L-seryl-[protein] + H2O = L-seryl-[protein] + phosphate. It catalyses the reaction O-phospho-L-threonyl-[protein] + H2O = L-threonyl-[protein] + phosphate. The catalysed reaction is 1,2-dioctanoyl-sn-glycero-3-phospho-(1-D-myo-inositol-3-phosphate) + H2O = 1,2-dioctanoyl-sn-glycero-3-phospho-(1D-myo-inositol) + phosphate. The enzyme catalyses 1,2-dioctanoyl-sn-glycero-3-phospho-(1-D-myo-inositol-4-phosphate) + H2O = 1,2-dioctanoyl-sn-glycero-3-phospho-(1D-myo-inositol) + phosphate. It carries out the reaction 1,2-dioctanoyl-sn-glycero-3-phospho-(1D-myo-inositol-5-phosphate) + H2O = 1,2-dioctanoyl-sn-glycero-3-phospho-(1D-myo-inositol) + phosphate. Binding to host ubiquitin is required to activate the phosphatidylinositol phosphate phosphatase activity. Phosphatase activity is inhibited by sodium orthovanadate, a specific inhibitor of tyrosine phosphatases, but not by okadaic acid, an inhibitor of serine/threonine phosphatases. Inhibition of the enzyme reduces mycobacterial survival in infected macrophages. Inhibitors also enhance killing efficacy by first-line antibiotics. Essential virulence factor that promotes mycobacterial survival within host macrophages. Acts as a phosphatase that possesses triple substrate specificity toward phosphotyrosine, phosphoserine/threonine and phosphoinositides. Supports mycobacteria survival during infection by modulating the normal host signaling pathways, attenuating the bactericidal immune responses and promoting the host cell survival. Inhibits host pyroptosis by disrupting the membrane localization of host gasdermin-D (GSDMD): acts by catalyzing dephosphorylation of phosphatidylinositol (4,5)-bisphosphate and phosphatidylinositol 4-phosphate, thereby inhibiting the membrane targeting of GSDMD and subsequent cytokine release and pyroptosis. Inhibits host inflammatory responses and apoptosis through impeding the NF-kappa-B and MAPK signal pathways and TP53/p53 expression in the macrophage. Blocks the IL6/IL-6 production by down-regulating ERK1/2, p38 and p65 activity. Prevents macrophage cell death by activating the Akt pathway and blocking caspase 3 activity. Reduces the expression of iNOS in activated macrophages and inhibits the generation of destroying reactive nitrogen intermediate NO. The polypeptide is Triple specificity protein phosphatase PtpB (Mycobacterium tuberculosis (strain ATCC 25618 / H37Rv)).